A 212-amino-acid polypeptide reads, in one-letter code: uncharacterized protein (212 aa).

S-adenosyl-L-methionine is bound by residues Gly53, Glu74, and Asp97.

The protein belongs to the methyltransferase superfamily. YrrT family.

Could be a S-adenosyl-L-methionine-dependent methyltransferase. This is an uncharacterized protein from Bacillus mycoides (strain KBAB4) (Bacillus weihenstephanensis).